A 311-amino-acid polypeptide reads, in one-letter code: Ornithine carbamoyltransferase (311 aa).

Residues glutamine 85, arginine 109, and 136 to 139 (HPCQ) each bind carbamoyl phosphate. L-ornithine contacts are provided by residues asparagine 167, aspartate 231, and 235 to 236 (SM). Residues 271-272 (CL) and arginine 299 contribute to the carbamoyl phosphate site.

It belongs to the aspartate/ornithine carbamoyltransferase superfamily. OTCase family.

The protein resides in the cytoplasm. The catalysed reaction is carbamoyl phosphate + L-ornithine = L-citrulline + phosphate + H(+). It functions in the pathway amino-acid biosynthesis; L-arginine biosynthesis; L-arginine from L-ornithine and carbamoyl phosphate: step 1/3. In terms of biological role, reversibly catalyzes the transfer of the carbamoyl group from carbamoyl phosphate (CP) to the N(epsilon) atom of ornithine (ORN) to produce L-citrulline. The sequence is that of Ornithine carbamoyltransferase (argF) from Geobacillus stearothermophilus (Bacillus stearothermophilus).